The chain runs to 461 residues: ATP-dependent protease ATPase subunit HslU (461 aa).

ATP-binding positions include I18 and 60-65 (GVGKTE). Residues 157–178 (EGSSVKPEPTAQQKESRQKMRK) are disordered. ATP-binding residues include D273, E339, and R411.

This sequence belongs to the ClpX chaperone family. HslU subfamily. As to quaternary structure, a double ring-shaped homohexamer of HslV is capped on each side by a ring-shaped HslU homohexamer. The assembly of the HslU/HslV complex is dependent on binding of ATP.

It is found in the cytoplasm. ATPase subunit of a proteasome-like degradation complex; this subunit has chaperone activity. The binding of ATP and its subsequent hydrolysis by HslU are essential for unfolding of protein substrates subsequently hydrolyzed by HslV. HslU recognizes the N-terminal part of its protein substrates and unfolds these before they are guided to HslV for hydrolysis. In Magnetococcus marinus (strain ATCC BAA-1437 / JCM 17883 / MC-1), this protein is ATP-dependent protease ATPase subunit HslU.